A 153-amino-acid polypeptide reads, in one-letter code: Ubiquitin-conjugating enzyme E2 36 (153 aa).

One can recognise a UBC core domain in the interval 5–151 (NLPRRIIKET…AKEWTRLYAS (147 aa)). Cys-89 acts as the Glycyl thioester intermediate in catalysis.

The protein belongs to the ubiquitin-conjugating enzyme family. As to quaternary structure, interacts with yeast and human Mms2, with the RING domain of RGLG2 and with UEV1A, UEV1B, UEV1C and UEV1D. As to expression, ubiquitously expressed at low level.

The catalysed reaction is S-ubiquitinyl-[E1 ubiquitin-activating enzyme]-L-cysteine + [E2 ubiquitin-conjugating enzyme]-L-cysteine = [E1 ubiquitin-activating enzyme]-L-cysteine + S-ubiquitinyl-[E2 ubiquitin-conjugating enzyme]-L-cysteine.. It functions in the pathway protein modification; protein ubiquitination. In terms of biological role, catalyzes the synthesis of non-canonical poly-ubiquitin chains that are linked through 'Lys-63'. This type of poly-ubiquitination does not lead to protein degradation by the proteasome. Mediates transcriptional activation of target genes. Required for postreplication repair of UV-damaged DNA and for adapting root developmental programs to suboptimal availability of iron. The sequence is that of Ubiquitin-conjugating enzyme E2 36 (UBC36) from Arabidopsis thaliana (Mouse-ear cress).